The sequence spans 120 residues: Anti-adapter protein IraM (120 aa).

It belongs to the IraM/RssC family.

It localises to the cytoplasm. In terms of biological role, involved in the stabilization of the sigma stress factor RpoS. This chain is Anti-adapter protein IraM, found in Salmonella choleraesuis (strain SC-B67).